Reading from the N-terminus, the 703-residue chain is Glycine--tRNA ligase beta subunit (703 aa).

Belongs to the class-II aminoacyl-tRNA synthetase family. In terms of assembly, tetramer of two alpha and two beta subunits.

It localises to the cytoplasm. The catalysed reaction is tRNA(Gly) + glycine + ATP = glycyl-tRNA(Gly) + AMP + diphosphate. In Myxococcus xanthus (strain DK1622), this protein is Glycine--tRNA ligase beta subunit.